The primary structure comprises 140 residues: Large ribosomal subunit protein uL16 (140 aa).

The protein belongs to the universal ribosomal protein uL16 family. In terms of assembly, part of the 50S ribosomal subunit.

Binds 23S rRNA and is also seen to make contacts with the A and possibly P site tRNAs. This Geotalea uraniireducens (strain Rf4) (Geobacter uraniireducens) protein is Large ribosomal subunit protein uL16.